Consider the following 121-residue polypeptide: Phosphoribosyl-AMP cyclohydrolase (121 aa).

Position 76 (Asp-76) interacts with Mg(2+). Zn(2+) is bound at residue Cys-77. Mg(2+) is bound by residues Asp-78 and Asp-80. The Zn(2+) site is built by Cys-93 and Cys-100.

Belongs to the PRA-CH family. As to quaternary structure, homodimer. Mg(2+) is required as a cofactor. Requires Zn(2+) as cofactor.

It is found in the cytoplasm. The catalysed reaction is 1-(5-phospho-beta-D-ribosyl)-5'-AMP + H2O = 1-(5-phospho-beta-D-ribosyl)-5-[(5-phospho-beta-D-ribosylamino)methylideneamino]imidazole-4-carboxamide. Its pathway is amino-acid biosynthesis; L-histidine biosynthesis; L-histidine from 5-phospho-alpha-D-ribose 1-diphosphate: step 3/9. Its function is as follows. Catalyzes the hydrolysis of the adenine ring of phosphoribosyl-AMP. The chain is Phosphoribosyl-AMP cyclohydrolase from Methanococcoides burtonii (strain DSM 6242 / NBRC 107633 / OCM 468 / ACE-M).